A 355-amino-acid polypeptide reads, in one-letter code: Heat-inducible transcription repressor HrcA (355 aa).

The protein belongs to the HrcA family.

Its function is as follows. Negative regulator of class I heat shock genes (grpE-dnaK-dnaJ and groELS operons). Prevents heat-shock induction of these operons. The protein is Heat-inducible transcription repressor HrcA of Nitratidesulfovibrio vulgaris (strain DSM 19637 / Miyazaki F) (Desulfovibrio vulgaris).